Reading from the N-terminus, the 283-residue chain is 5'-nucleotidase SurE (283 aa).

A divalent metal cation contacts are provided by D14, D15, S47, and N105.

It belongs to the SurE nucleotidase family. It depends on a divalent metal cation as a cofactor.

The protein resides in the cytoplasm. The enzyme catalyses a ribonucleoside 5'-phosphate + H2O = a ribonucleoside + phosphate. Its function is as follows. Nucleotidase that shows phosphatase activity on nucleoside 5'-monophosphates. This Chlamydia trachomatis serovar L2 (strain ATCC VR-902B / DSM 19102 / 434/Bu) protein is 5'-nucleotidase SurE.